A 608-amino-acid chain; its full sequence is MFNRTTQLKSKHPCSVCTRRKVKCDRMIPCGNCRKRGQDSECMKSTKLITASSSKEYLPDLLLFWQNYEYWITNIGLYKTKQRDLTRTPANLDTDTEECMFWMNYLQKDQSFQLMNFAMENLGALYFGSIGDISELYLRVEQYWDRRADKNHSVDGKYWDALIWSVFTMCIYYMPVEKLAEIFSVYPLHEYLGSNKRLNWEDGMQLVMCQNFARCSLFQLKQCDFMAHPDIRLVQAYLILATTTFPYDEPLLANSLLTQCIHTFKNFHVDDFRPLLNDDPVESIAKVTLGRIFYRLCGCDYLQSGPRKPIALHTEVSSLLQHAAYLQDLPNVDVYREENSTEVLYWKIISLDRDLDQYLNKSSKPPLKTLDAIRRELDIFQYKVDSLEEDFRSNNSRFQKFIALFQISTVSWKLFKMYLIYYDTADSLLKVIHYSKVIISLIVNNFHAKSEFFNRHPMVMQTITRVVSFISFYQIFVESAAVKQLLVDLTELTANLPTIFGSKLDKLVYLTERLSKLKLLWDKVQLLDSGDSFYHPVFKILQNDIKIIELKNDEMFSLIKGLGSLVPLNKLRQESLLEEEDENNTEPSDFRTIVEEFQSEYNISDILS.

A DNA-binding region (zn(2)-C6 fungal-type) is located at residues 14 to 42; it reads CSVCTRRKVKCDRMIPCGNCRKRGQDSEC. At S575 the chain carries Phosphoserine.

Component of the CBF3 copmplex, which is formed of CBF3A/CBF2, CBF3B/CEP3, CBF3C/CTF13 and CBF3D.

It is found in the nucleus. It localises to the chromosome. The protein localises to the centromere. Its function is as follows. Acts as a component of the centromere DNA-binding protein complex CBF3, which is essential for chromosome segregation and movement of centromeres along microtubules. CBF3 is required for the recruitment of other kinetochore complexes to CEN DNA. It plays a role in the attachment of chromosomes to the spindle and binds selectively to a highly conserved DNA sequence called CDEIII, found in centromers and in several promoters. This chain is Centromere DNA-binding protein complex CBF3 subunit B (CEP3), found in Saccharomyces cerevisiae (strain ATCC 204508 / S288c) (Baker's yeast).